Consider the following 483-residue polypeptide: Ribulose bisphosphate carboxylase large chain (483 aa).

Positions 1–2 are excised as a propeptide; the sequence is MS. Positions 123 and 173 each coordinate substrate. Catalysis depends on Lys-175, which acts as the Proton acceptor. Residue Lys-177 coordinates substrate. Residues Lys-201, Asp-203, and Glu-204 each coordinate Mg(2+). At Lys-201 the chain carries N6-carboxylysine. Ser-208 is subject to Phosphoserine. His-294 functions as the Proton acceptor in the catalytic mechanism. Substrate is bound by residues Arg-295 and His-327. Thr-330 carries the phosphothreonine modification. Ser-379 is a substrate binding site.

The protein belongs to the RuBisCO large chain family. Type I subfamily. Heterohexadecamer of 8 large chains and 8 small chains; disulfide-linked. The disulfide link is formed within the large subunit homodimers. Mg(2+) is required as a cofactor. The disulfide bond which can form in the large chain dimeric partners within the hexadecamer appears to be associated with oxidative stress and protein turnover.

The protein localises to the plastid. It is found in the chloroplast. It catalyses the reaction 2 (2R)-3-phosphoglycerate + 2 H(+) = D-ribulose 1,5-bisphosphate + CO2 + H2O. The catalysed reaction is D-ribulose 1,5-bisphosphate + O2 = 2-phosphoglycolate + (2R)-3-phosphoglycerate + 2 H(+). Its function is as follows. RuBisCO catalyzes two reactions: the carboxylation of D-ribulose 1,5-bisphosphate, the primary event in carbon dioxide fixation, as well as the oxidative fragmentation of the pentose substrate in the photorespiration process. Both reactions occur simultaneously and in competition at the same active site. This Aethionema cordifolium (Lebanon stonecress) protein is Ribulose bisphosphate carboxylase large chain.